A 201-amino-acid chain; its full sequence is Large ribosomal subunit protein uL4 (201 aa).

Positions 44 to 71 are disordered; the sequence is RAQKTRAEVTGSGKKPWRQKGTGRARSG.

This sequence belongs to the universal ribosomal protein uL4 family. As to quaternary structure, part of the 50S ribosomal subunit.

One of the primary rRNA binding proteins, this protein initially binds near the 5'-end of the 23S rRNA. It is important during the early stages of 50S assembly. It makes multiple contacts with different domains of the 23S rRNA in the assembled 50S subunit and ribosome. In terms of biological role, forms part of the polypeptide exit tunnel. This chain is Large ribosomal subunit protein uL4, found in Edwardsiella ictaluri (strain 93-146).